The chain runs to 611 residues: Threonine--tRNA ligase (611 aa).

Positions 1 to 145 are editing domain; sequence MRLLLIHSDH…TILPGEGAAA (145 aa). The catalytic stretch occupies residues 195-487; sequence VHVDLMRAKE…TAAQEVPSFP (293 aa). Zn(2+) contacts are provided by Cys-287, His-339, and His-460.

It belongs to the class-II aminoacyl-tRNA synthetase family. In terms of assembly, homodimer. The cofactor is Zn(2+).

Its subcellular location is the cytoplasm. The enzyme catalyses tRNA(Thr) + L-threonine + ATP = L-threonyl-tRNA(Thr) + AMP + diphosphate + H(+). Functionally, catalyzes the attachment of threonine to tRNA(Thr) in a two-step reaction: L-threonine is first activated by ATP to form Thr-AMP and then transferred to the acceptor end of tRNA(Thr). Also edits incorrectly charged L-seryl-tRNA(Thr). In Methanoculleus marisnigri (strain ATCC 35101 / DSM 1498 / JR1), this protein is Threonine--tRNA ligase.